The chain runs to 281 residues: Protein ZAR1-like 1.S (281 aa).

Residues 183–267 (QKYGFFQCKD…QDLCGRCKGQ (85 aa)) form a 3CxxC-type zinc finger.

Belongs to the ZAR1 family. As to quaternary structure, component of a cytoplasmic ribonucleoprotein complex together with eif4enif1/4E-T and cpeb1. In terms of tissue distribution, expressed in oocytes.

The protein resides in the cytoplasm. It is found in the cytoplasmic ribonucleoprotein granule. Its function is as follows. mRNA-binding protein required for maternal mRNA storage, translation and degradation during oocyte maturation. Controls timing of meiosis during oogenesis. Probably promotes formation of some phase-separated membraneless compartment that stores maternal mRNAs in oocytes: acts by undergoing liquid-liquid phase separation upon binding to maternal mRNAs. Binds to the 3'-UTR of maternal mRNAs, inhibiting their translation. The chain is Protein ZAR1-like 1.S from Xenopus laevis (African clawed frog).